The sequence spans 117 residues: Large ribosomal subunit protein uL18 (117 aa).

The protein belongs to the universal ribosomal protein uL18 family. As to quaternary structure, part of the 50S ribosomal subunit; part of the 5S rRNA/L5/L18/L25 subcomplex. Contacts the 5S and 23S rRNAs.

In terms of biological role, this is one of the proteins that bind and probably mediate the attachment of the 5S RNA into the large ribosomal subunit, where it forms part of the central protuberance. This Phytoplasma australiense protein is Large ribosomal subunit protein uL18.